The following is a 296-amino-acid chain: Glycine--tRNA ligase alpha subunit (296 aa).

The protein belongs to the class-II aminoacyl-tRNA synthetase family. As to quaternary structure, tetramer of two alpha and two beta subunits.

It localises to the cytoplasm. It catalyses the reaction tRNA(Gly) + glycine + ATP = glycyl-tRNA(Gly) + AMP + diphosphate. This Parasynechococcus marenigrum (strain WH8102) protein is Glycine--tRNA ligase alpha subunit.